We begin with the raw amino-acid sequence, 774 residues long: E3 ubiquitin-protein ligase RFWD3 (774 aa).

Phosphoserine; by ATM and ATR occurs at positions 46 and 63. Disordered stretches follow at residues 95–116, 139–225, and 257–280; these read NPRTSEQHRQGSDGNHTIPASS, PSSS…AEYG, and GGKTLPKQPSPQKSEPLLPSASMD. A compositionally biased stretch (polar residues) spans 106-116; sequence SDGNHTIPASS. Positions 150–162 are enriched in basic residues; it reads RTRRRVSASRRAR. The segment covering 211 to 221 has biased composition (low complexity); sequence SSSSDSDSDSS. The RING-type; degenerate zinc-finger motif lies at 287-331; sequence CTICLEQWTNAGDHRLSALRCGHLFGYRCISTWLKGQVRKCPQCN. Residues 361–413 adopt a coiled-coil conformation; the sequence is SLLKEQMLRKQAELESAQCRLQLQVLTDKCTRLQRRVQDLQKLTSHQSQNLQQ. 3 WD repeats span residues 495 to 537, 539 to 577, and 583 to 628; these read MHGK…QTYN, GRPVWSCCWCLDEANYIYAGLANGSILVYDVRNTSSHVQ, and KARC…SHWP.

As to quaternary structure, interacts with MDM2 and p53/TP53. Binds to the RPA complex via direct interaction with RPA2. Interacts with RAD51. Post-translationally, phosphorylated at Ser-46 and Ser-63 upon DNA damage by ATM or ATR. ATM phosphorylation occurs at early times upon DNA damage, while ATR is the major kinase at later times. Phosphorylation by ATM and ATR is required to stabilize p53/TP53. Part of the phosphorylation depends upon RPA2 presence.

The protein resides in the nucleus. It is found in the PML body. The protein localises to the cytoplasm. The catalysed reaction is S-ubiquitinyl-[E2 ubiquitin-conjugating enzyme]-L-cysteine + [acceptor protein]-L-lysine = [E2 ubiquitin-conjugating enzyme]-L-cysteine + N(6)-ubiquitinyl-[acceptor protein]-L-lysine.. It participates in protein modification; protein ubiquitination. In terms of biological role, E3 ubiquitin-protein ligase required for the repair of DNA interstrand cross-links (ICL) in response to DNA damage. Plays a key role in RPA-mediated DNA damage signaling and repair. Acts by mediating ubiquitination of the RPA complex (RPA1, RPA2 and RPA3 subunits) and RAD51 at stalled replication forks, leading to remove them from DNA damage sites and promote homologous recombination. Also mediates the ubiquitination of p53/TP53 in the late response to DNA damage, and acts as a positive regulator of p53/TP53 stability, thereby regulating the G1/S DNA damage checkpoint. May act by catalyzing the formation of short polyubiquitin chains on p53/TP53 that are not targeted to the proteasome. In response to ionizing radiation, interacts with MDM2 and enhances p53/TP53 ubiquitination, possibly by restricting MDM2 from extending polyubiquitin chains on ubiquitinated p53/TP53. Required to translesion DNA synthesis across DNA-protein cross-link adducts by catalyzing ubiquitination of proteins on single-stranded DNA (ssDNA). The sequence is that of E3 ubiquitin-protein ligase RFWD3 from Homo sapiens (Human).